We begin with the raw amino-acid sequence, 516 residues long: Melianol synthase CYP71BQ17 (516 aa).

The helical transmembrane segment at 14 to 34 threads the bilayer; it reads MPHLPSLPVSLSFLLFFLMLV. Residue cysteine 454 coordinates heme.

It belongs to the cytochrome P450 family. Heme is required as a cofactor. In terms of tissue distribution, mainly expressed in roots and, to a lesser extent, in stems and old leaves.

Its subcellular location is the membrane. It carries out the reaction dihydroniloticin + 2 reduced [NADPH--hemoprotein reductase] + 2 O2 = melianol + 2 oxidized [NADPH--hemoprotein reductase] + 3 H2O + 2 H(+). Its pathway is secondary metabolite biosynthesis; terpenoid biosynthesis. Functionally, monooxygenase involved in the biosynthesis of quassinoids triterpene natural products such as ailanthone, chaparrinone, glaucarubinone and amarolide, allelopathic degraded triterpene lactones inhibiting the growth of other plants, and possessing antimalarial, antifeedant, insecticidal, anti-inflammatory and anticancer activities. Catalyzes the conversion of dihydroniloticin to the protolimonoid melianol. The polypeptide is Melianol synthase CYP71BQ17 (Ailanthus altissima (Tree-of-heaven)).